The primary structure comprises 149 residues: UPF0178 protein CPR_2251 (149 aa).

Belongs to the UPF0178 family.

In Clostridium perfringens (strain SM101 / Type A), this protein is UPF0178 protein CPR_2251.